Here is a 431-residue protein sequence, read N- to C-terminus: Adenylosuccinate synthetase (431 aa).

GTP is bound by residues 12-18 (GDEGKGK) and 40-42 (GHT). Asp13 serves as the catalytic Proton acceptor. The Mg(2+) site is built by Asp13 and Gly40. IMP contacts are provided by residues 13–16 (DEGK), 38–41 (NAGH), Thr131, Arg145, Gln225, Thr240, and Arg304. His41 serves as the catalytic Proton donor. 300–306 (TTTGRKR) is a binding site for substrate. Residues Arg306, 332–334 (KLD), and 414–416 (STS) contribute to the GTP site.

Belongs to the adenylosuccinate synthetase family. In terms of assembly, homodimer. It depends on Mg(2+) as a cofactor.

It localises to the cytoplasm. It catalyses the reaction IMP + L-aspartate + GTP = N(6)-(1,2-dicarboxyethyl)-AMP + GDP + phosphate + 2 H(+). It participates in purine metabolism; AMP biosynthesis via de novo pathway; AMP from IMP: step 1/2. Its function is as follows. Plays an important role in the de novo pathway of purine nucleotide biosynthesis. Catalyzes the first committed step in the biosynthesis of AMP from IMP. The protein is Adenylosuccinate synthetase of Dinoroseobacter shibae (strain DSM 16493 / NCIMB 14021 / DFL 12).